We begin with the raw amino-acid sequence, 216 residues long: MVGRLSLQDVPELVDTKKKGDGVLDSPDSGLPPSPSPSHWGLAATAGGGGERAPVAGTLEPDAAVTPIVPNPASLTHSLAAICSPRLCPLSFGEGVEFDPLPPKEIKYTSSVKYDSERHFIDDVQMPLGLVVASCSQTVTCIPNCTWRNYKAEVRFEPRPKPARFLSTTIVYPKYPKTVYTTTLDYNCHKKLRRFLSSVELEATEFLGSDGLADEC.

The disordered stretch occupies residues 1–55 (MVGRLSLQDVPELVDTKKKGDGVLDSPDSGLPPSPSPSHWGLAATAGGGGERAPV). Residues Ser6 and Ser26 each carry the phosphoserine modification.

It belongs to the Refilin family. As to quaternary structure, interacts with FLNA and FLNB. In terms of tissue distribution, detected in various tissues, with highest expression in lung, followed by spleen.

Its subcellular location is the cytoplasm. It localises to the cytoskeleton. Its function is as follows. Involved in the regulation of the perinuclear actin network and nuclear shape through interaction with filamins. Plays an essential role in the formation of cartilaginous skeletal elements. This Mus musculus (Mouse) protein is Refilin-B.